Here is a 101-residue protein sequence, read N- to C-terminus: Phosphoprotein OPG062 (101 aa).

Residues 50–73 (KPSSPTCERRPSSPSRCERMNNPG) form a disordered region. Residues 56–68 (CERRPSSPSRCER) are compositionally biased toward basic and acidic residues.

Belongs to the orthopoxvirus OPG062 family. Self-associates to form high molecular-weight forms. Interacts with protein OPG157. Interacts with host RICTOR and RPTOR; these interactions disrupt the mTORC1 and mTORC2 crosstalk.

The protein localises to the virion. In terms of biological role, plays an essential role in virion assembly and morphogenesis. Also plays a role in the inhibition of host immune response by dysregulating mTOR. Sequesters host RICTOR and RPTOR, thereby disrupting mTORC1 and mTORC2 crosstalk. In turn, blocks the host antiviral response in part through mTOR-dependent degradation of cGAS, the primary poxvirus sensor. This chain is Phosphoprotein OPG062 (OPG062), found in Monkeypox virus.